A 545-amino-acid polypeptide reads, in one-letter code: Acetyltransferase BOT5 (545 aa).

Positions M1–A19 are cleaved as a signal peptide. N-linked (GlcNAc...) asparagine glycosylation is found at N70 and N198. Residue H208 is the Proton acceptor of the active site. Residues N346 and N445 are each glycosylated (N-linked (GlcNAc...) asparagine). A disordered region spans residues G466 to R493.

The protein belongs to the plant acyltransferase family.

It functions in the pathway secondary metabolite biosynthesis. In terms of biological role, acetyltransferase; part of the gene cluster that mediates the biosynthesis of botrydial. Botrydial is necessary for colonization of plant tissue by the T4 strain. It is a strain-dependent virulence factor since highly aggressive strains like SAS56 or B05 still retain substantial virulence when botrydial synthesis is impaired, since they produce also botcinic acid. The first step of botrydial biosynthesis is performed by the sesquiterpene synthase BOT2 which catalyzes the cyclization of farnesyl diphosphate (FPP) to presilphiperfolan-8-beta-ol (PSP). The cytochrome P450 monooxygenase BOT4 then catalyzes the hydroxylation at C-4 to give a probotryane intermediate. Acetylation of the hydroxyl at C-4 is carried out by the acetyltransferase BOT5, followed by the combined action of the P450 monooxygenases BOT3 and BOT1, to yield finally the glycol, via the regio- and stereospecific hydroxylations at C-10 and C-15 of the probotryane intermediates, respectively. The cleavage of the C10-C15 bond of probotryane skeleton is an intriguing and chemically important reaction, which could be mediated by some of the monooxygenases or by a combination of them. It is possible that either BOT3 or BOT1 would oxidize either the 10- or the 15-hydroxy group to the hydroperoxide derivative, which would then undergo heterolytic fragmentation to give the dialdehyde botrydial. Finally, the dehydrogenase BOT7 might be involved in the conversion of botrydial to dihydrobotrydial. This Botryotinia fuckeliana (Noble rot fungus) protein is Acetyltransferase BOT5.